Consider the following 300-residue polypeptide: N-acetylmannosamine kinase (300 aa).

ATP-binding positions include 5 to 12 (ALDIGGTK) and 132 to 139 (GVGGGIVL). The Zn(2+) site is built by histidine 156, cysteine 166, cysteine 168, and cysteine 173.

It belongs to the ROK (NagC/XylR) family. NanK subfamily. As to quaternary structure, homodimer.

It catalyses the reaction an N-acyl-D-mannosamine + ATP = an N-acyl-D-mannosamine 6-phosphate + ADP + H(+). It participates in amino-sugar metabolism; N-acetylneuraminate degradation; D-fructose 6-phosphate from N-acetylneuraminate: step 2/5. Its function is as follows. Catalyzes the phosphorylation of N-acetylmannosamine (ManNAc) to ManNAc-6-P. The sequence is that of N-acetylmannosamine kinase from Haemophilus influenzae (strain 86-028NP).